Here is a 470-residue protein sequence, read N- to C-terminus: Ribulose bisphosphate carboxylase large chain (470 aa).

Asn-115 and Thr-165 together coordinate substrate. Catalysis depends on Lys-167, which acts as the Proton acceptor. Position 169 (Lys-169) interacts with substrate. Mg(2+) is bound by residues Lys-193, Asp-195, and Glu-196. At Lys-193 the chain carries N6-carboxylysine. The active-site Proton acceptor is the His-286. Residues Arg-287, His-319, and Ser-371 each coordinate substrate.

The protein belongs to the RuBisCO large chain family. Type I subfamily. As to quaternary structure, heterohexadecamer of 8 large chains and 8 small chains. Mg(2+) serves as cofactor.

It is found in the carboxysome. It carries out the reaction 2 (2R)-3-phosphoglycerate + 2 H(+) = D-ribulose 1,5-bisphosphate + CO2 + H2O. It catalyses the reaction D-ribulose 1,5-bisphosphate + O2 = 2-phosphoglycolate + (2R)-3-phosphoglycerate + 2 H(+). Functionally, ruBisCO catalyzes two reactions: the carboxylation of D-ribulose 1,5-bisphosphate, the primary event in carbon dioxide fixation, as well as the oxidative fragmentation of the pentose substrate in the photorespiration process. Both reactions occur simultaneously and in competition at the same active site. The protein is Ribulose bisphosphate carboxylase large chain of Prochlorococcus marinus (strain MIT 9303).